Consider the following 206-residue polypeptide: Ribonuclease HII (206 aa).

The RNase H type-2 domain maps to 27-206 (ARIAGVDEAG…CALHRRSFKH (180 aa)). 3 residues coordinate a divalent metal cation: Asp33, Glu34, and Asp125.

The protein belongs to the RNase HII family. Requires Mn(2+) as cofactor. Mg(2+) is required as a cofactor.

It is found in the cytoplasm. The enzyme catalyses Endonucleolytic cleavage to 5'-phosphomonoester.. Its function is as follows. Endonuclease that specifically degrades the RNA of RNA-DNA hybrids. In Moorella thermoacetica (strain ATCC 39073 / JCM 9320), this protein is Ribonuclease HII.